The chain runs to 105 residues: Large ribosomal subunit protein bL21c (105 aa).

The protein belongs to the bacterial ribosomal protein bL21 family. Part of the 50S ribosomal subunit.

The protein resides in the plastid. Its subcellular location is the chloroplast. Its function is as follows. This protein binds to 23S rRNA. The sequence is that of Large ribosomal subunit protein bL21c from Trieres chinensis (Marine centric diatom).